A 365-amino-acid polypeptide reads, in one-letter code: MSDEIVTNKSVTYVNNTTPVTITXSELDLRSCYQDDEVVIEVHAAALNPIDFITHQLCNSYIFGKYPKTYSRDYSGVIIKAGKDVDNRWKVGDKVNGMYSHIYGERGTLTHYLILNPAKDIPITHMVEVPKDENDPYDDFVYAAAWPLTFGTAFSTLYDFKKDWTSDSKVLVIGASTSVSYAFVHIAKNYFNIGTVVGICSKNSIERNKKLGYDYLVPYDEGSIVENVKKLKQIVLENDKFDMIXDSVGNHDFFPVIDQFLKPKAKNSFYVTIAGNNKANYKNISWRDFVSLSSILKAINPFKKYNWRFGHPYPPNNFIEVGNEMIKKGTYKPPIDSVYEFDQYKEAIDRLMSNRAKGKVVVKMK.

It belongs to the YIM1 family.

The protein localises to the lipid droplet. It is found in the mitochondrion. This Saccharomyces cerevisiae (strain FostersO) (Baker's yeast) protein is Protein YIM1 (YIM1).